The chain runs to 321 residues: L-carnitine dehydrogenase (321 aa).

Residue 14-19 (GSGVIG) participates in NAD(+) binding. An important for catalytic activity region spans residues 317 to 321 (MTFSE).

Belongs to the 3-hydroxyacyl-CoA dehydrogenase family. L-carnitine dehydrogenase subfamily. Homodimer.

Its subcellular location is the cytoplasm. The catalysed reaction is carnitine + NAD(+) = 3-dehydrocarnitine + NADH + H(+). Its pathway is amine and polyamine metabolism; carnitine metabolism. With respect to regulation, the enzyme activity is strongly inhibited by Ag(+), Ni(+), Hg(+), and p-chloromercuribenzoate, and partially inhibited by Li(+), Ca(2+), Mn(2+), Co(2+), Cu(2+), and Zn(2+). Its function is as follows. Catalyzes the NAD(+)-dependent oxidation of L-carnitine to 3-dehydrocarnitine. Is specific for L-carnitine and NAD(+) as substrates since D-carnitine, other carnitine analogs such as choline and betaine, and NADP(+) are not substrates. Despite a high similarity to 3-hydroxyacyl-CoA dehydrogenases, cannot dehydrogenate 3-hydroxybutylate and 3-hydroxybutyl-CoA. Is probably involved in a L-carnitine degradation pathway that allows Pseudomonas sp. strain NBRC 13558 to grow on L-carnitine as the sole source of carbon and nitrogen. This is L-carnitine dehydrogenase from Pseudomonas sp.